The following is a 299-amino-acid chain: Porphobilinogen deaminase (299 aa).

At Cys-234 the chain carries S-(dipyrrolylmethanemethyl)cysteine.

The protein belongs to the HMBS family. In terms of assembly, monomer. The cofactor is dipyrromethane.

The catalysed reaction is 4 porphobilinogen + H2O = hydroxymethylbilane + 4 NH4(+). It participates in porphyrin-containing compound metabolism; protoporphyrin-IX biosynthesis; coproporphyrinogen-III from 5-aminolevulinate: step 2/4. In terms of biological role, tetrapolymerization of the monopyrrole PBG into the hydroxymethylbilane pre-uroporphyrinogen in several discrete steps. This chain is Porphobilinogen deaminase, found in Corynebacterium efficiens (strain DSM 44549 / YS-314 / AJ 12310 / JCM 11189 / NBRC 100395).